Consider the following 355-residue polypeptide: Methionine import ATP-binding protein MetN 1 (355 aa).

One can recognise an ABC transporter domain in the interval 6 to 245 (IDLKDIAVTF…PKAPLTVDFV (240 aa)). An ATP-binding site is contributed by 42-49 (GYSGAGKS).

It belongs to the ABC transporter superfamily. Methionine importer (TC 3.A.1.24) family. The complex is composed of two ATP-binding proteins (MetN), two transmembrane proteins (MetI) and a solute-binding protein (MetQ).

The protein resides in the cell membrane. The enzyme catalyses L-methionine(out) + ATP + H2O = L-methionine(in) + ADP + phosphate + H(+). It catalyses the reaction D-methionine(out) + ATP + H2O = D-methionine(in) + ADP + phosphate + H(+). Part of the ABC transporter complex MetNIQ involved in methionine import. Responsible for energy coupling to the transport system. The chain is Methionine import ATP-binding protein MetN 1 from Lactiplantibacillus plantarum (strain ATCC BAA-793 / NCIMB 8826 / WCFS1) (Lactobacillus plantarum).